A 76-amino-acid chain; its full sequence is Exodeoxyribonuclease 7 small subunit (76 aa).

This sequence belongs to the XseB family. In terms of assembly, heterooligomer composed of large and small subunits.

It is found in the cytoplasm. The enzyme catalyses Exonucleolytic cleavage in either 5'- to 3'- or 3'- to 5'-direction to yield nucleoside 5'-phosphates.. In terms of biological role, bidirectionally degrades single-stranded DNA into large acid-insoluble oligonucleotides, which are then degraded further into small acid-soluble oligonucleotides. The sequence is that of Exodeoxyribonuclease 7 small subunit from Geobacillus thermodenitrificans (strain NG80-2).